A 162-amino-acid polypeptide reads, in one-letter code: Type IV major fimbrial protein FimA (162 aa).

Residues 1 to 7 (MKSLQKG) constitute a propeptide, leader sequence. Phenylalanine 8 is modified (N-methylphenylalanine). Residues 8-28 (FTLIELMIVVAIIGILAAFAI) form a helical membrane-spanning segment. Residues cysteine 63 and cysteine 106 are joined by a disulfide bond.

The protein belongs to the N-Me-Phe pilin family.

It localises to the fimbrium. The protein resides in the membrane. In terms of biological role, major component of the type IV fimbriae that plays an essential role in twitching motility, natural transformation, and protease secretion. This Dichelobacter nodosus (strain VCS1703A) protein is Type IV major fimbrial protein FimA (fimA).